Consider the following 312-residue polypeptide: CD-NTase-associated protein 12 (312 aa).

In terms of domain architecture, TIR spans 5 to 127 (RLFIGSSSEE…FNGLTLARFD (123 aa)).

This sequence in the C-terminal section; belongs to the bacterial STING family. Forms homodimers; in the presence of c-di-GMP forms filaments with an ordered array of parallel-stacked subunits.

It catalyses the reaction NAD(+) + H2O = ADP-D-ribose + nicotinamide + H(+). With respect to regulation, NAD(+) hydrolase activity is strongly stimulated by c-di-GMP, weakly by 3'3'-cGAMP, very weakly by c-di-AMP but not at all by 2'3'-cGAMP. Self-association of TIR domains is required for NADase activity. Functionally, effector protein of a CBASS antiviral system with NAD(+) hydrolase activity. CBASS (cyclic oligonucleotide-based antiphage signaling system) provides immunity against bacteriophage. The CD-NTase protein synthesizes cyclic nucleotides in response to infection; these serve as specific second messenger signals. The signals activate a diverse range of effectors, leading to bacterial cell death and thus abortive phage infection. A type I-D CBASS(GG) system. In terms of biological role, binds c-di-GMP, does not bind cUMP-AMP. Upon activation by c-di-GMP forms filaments which hydrolyze NAD(+); filament formation is required for enzyme activation. This Niabella drilacis (strain DSM 25811 / CCM 8410 / CCUG 62505 / LMG 26954 / E90) protein is CD-NTase-associated protein 12.